Here is a 1208-residue protein sequence, read N- to C-terminus: DNA-directed RNA polymerase subunit beta (1208 aa).

The protein belongs to the RNA polymerase beta chain family. The RNAP catalytic core consists of 2 alpha, 1 beta, 1 beta' and 1 omega subunit. When a sigma factor is associated with the core the holoenzyme is formed, which can initiate transcription.

The enzyme catalyses RNA(n) + a ribonucleoside 5'-triphosphate = RNA(n+1) + diphosphate. DNA-dependent RNA polymerase catalyzes the transcription of DNA into RNA using the four ribonucleoside triphosphates as substrates. The polypeptide is DNA-directed RNA polymerase subunit beta (Enterococcus faecium (Streptococcus faecium)).